The following is a 337-amino-acid chain: Ketol-acid reductoisomerase (NADP(+)) (337 aa).

In terms of domain architecture, KARI N-terminal Rossmann spans Val3 to Thr183. Residues Tyr26 to Gln29, Lys49, Ser52, Ser54, and Asp84 to Gln87 contribute to the NADP(+) site. His109 is an active-site residue. Gly135 is a binding site for NADP(+). One can recognise a KARI C-terminal knotted domain in the interval Thr184–Val329. Residues Asp192, Glu196, Glu228, and Glu232 each coordinate Mg(2+). Ser253 contributes to the substrate binding site.

The protein belongs to the ketol-acid reductoisomerase family. Mg(2+) is required as a cofactor.

It carries out the reaction (2R)-2,3-dihydroxy-3-methylbutanoate + NADP(+) = (2S)-2-acetolactate + NADPH + H(+). It catalyses the reaction (2R,3R)-2,3-dihydroxy-3-methylpentanoate + NADP(+) = (S)-2-ethyl-2-hydroxy-3-oxobutanoate + NADPH + H(+). It participates in amino-acid biosynthesis; L-isoleucine biosynthesis; L-isoleucine from 2-oxobutanoate: step 2/4. The protein operates within amino-acid biosynthesis; L-valine biosynthesis; L-valine from pyruvate: step 2/4. Its function is as follows. Involved in the biosynthesis of branched-chain amino acids (BCAA). Catalyzes an alkyl-migration followed by a ketol-acid reduction of (S)-2-acetolactate (S2AL) to yield (R)-2,3-dihydroxy-isovalerate. In the isomerase reaction, S2AL is rearranged via a Mg-dependent methyl migration to produce 3-hydroxy-3-methyl-2-ketobutyrate (HMKB). In the reductase reaction, this 2-ketoacid undergoes a metal-dependent reduction by NADPH to yield (R)-2,3-dihydroxy-isovalerate. This Rhodococcus erythropolis (strain PR4 / NBRC 100887) protein is Ketol-acid reductoisomerase (NADP(+)).